The chain runs to 164 residues: Transcriptional regulator MraZ (164 aa).

2 SpoVT-AbrB domains span residues Arg-7–Val-63 and Leu-92–Arg-135.

The protein belongs to the MraZ family. As to quaternary structure, forms oligomers.

It localises to the cytoplasm. Its subcellular location is the nucleoid. The polypeptide is Transcriptional regulator MraZ (Chlorobaculum parvum (strain DSM 263 / NCIMB 8327) (Chlorobium vibrioforme subsp. thiosulfatophilum)).